The sequence spans 251 residues: NLP effector protein Pc129485 (251 aa).

Residues methionine 1–alanine 19 form the signal peptide. The Hepta-peptide GHRHDWE motif motif lies at glycine 127 to glutamate 133. 2 N-linked (GlcNAc...) asparagine glycosylation sites follow: asparagine 146 and asparagine 218.

The protein belongs to the Necrosis inducing protein (NPP1) family.

It localises to the secreted. Secreted effector that contributes strongly to virulence during infection by P.capsici. The sequence is that of NLP effector protein Pc129485 from Phytophthora capsici.